The primary structure comprises 280 residues: DegV domain-containing protein TTE1491 (280 aa).

Residues 4-279 (IAIVTDSLSD…PDAAGVFFEE (276 aa)) form the DegV domain. Residues T61 and S93 each contribute to the hexadecanoate site.

Its function is as follows. May bind long-chain fatty acids, such as palmitate, and may play a role in lipid transport or fatty acid metabolism. The protein is DegV domain-containing protein TTE1491 of Caldanaerobacter subterraneus subsp. tengcongensis (strain DSM 15242 / JCM 11007 / NBRC 100824 / MB4) (Thermoanaerobacter tengcongensis).